Reading from the N-terminus, the 221-residue chain is Molybdenum cofactor guanylyltransferase (221 aa).

Residues 18–20 (IAG), Lys35, Asn63, Asp81, and Asp112 each bind GTP. Mg(2+) is bound at residue Asp112.

It belongs to the MobA family. As to quaternary structure, monomer. Mg(2+) serves as cofactor.

It localises to the cytoplasm. It catalyses the reaction Mo-molybdopterin + GTP + H(+) = Mo-molybdopterin guanine dinucleotide + diphosphate. In terms of biological role, transfers a GMP moiety from GTP to Mo-molybdopterin (Mo-MPT) cofactor (Moco or molybdenum cofactor) to form Mo-molybdopterin guanine dinucleotide (Mo-MGD) cofactor. The polypeptide is Molybdenum cofactor guanylyltransferase (Brucella melitensis biotype 2 (strain ATCC 23457)).